A 1166-amino-acid chain; its full sequence is Zinc finger CCHC domain-containing protein 2 (1166 aa).

Disordered regions lie at residues 1 to 85 (MLRM…GGHA), 205 to 240 (RAEG…CAKL), 550 to 668 (SSAD…ARFS), and 904 to 982 (PASF…ISAV). Over residues 43-64 (PPPPPTGLPRGPPPPPSPPRGL) the composition is skewed to pro residues. A compositionally biased stretch (low complexity) spans 65 to 76 (EPPVASGPTAGA). Over residues 214 to 223 (EDEPSGDGEQ) the composition is skewed to acidic residues. Positions 572–587 (PQVEKEKVKKTEDRLN) are enriched in basic and acidic residues. Residues 624-633 (SSESYSSPSS) are compositionally biased toward low complexity. The segment covering 634 to 653 (PRHDGRESLESEEEKDRDSD) has biased composition (basic and acidic residues). The span at 919 to 947 (LPTQNSSALNAATSAQPASTGISPSQSTV) shows a compositional bias: polar residues. Pro residues predominate over residues 949-963 (PAVPTHTPGPAPSPS). A compositionally biased stretch (polar residues) spans 964 to 982 (PALTHSTAQSDSTSYISAV). The CCHC-type zinc-finger motif lies at 1119-1136 (VSCYNCGVSGHYAQDCKQ).

The chain is Zinc finger CCHC domain-containing protein 2 (Zcchc2) from Mus musculus (Mouse).